The chain runs to 417 residues: Serine--tRNA ligase (417 aa).

226–228 provides a ligand contact to L-serine; sequence TSE. ATP contacts are provided by residues 257 to 259 and valine 273; that span reads RRE. Glutamate 280 contributes to the L-serine binding site. 344-347 is an ATP binding site; the sequence is EVTS. An L-serine-binding site is contributed by threonine 379.

This sequence belongs to the class-II aminoacyl-tRNA synthetase family. Type-1 seryl-tRNA synthetase subfamily. Homodimer. The tRNA molecule binds across the dimer.

It localises to the cytoplasm. It catalyses the reaction tRNA(Ser) + L-serine + ATP = L-seryl-tRNA(Ser) + AMP + diphosphate + H(+). It carries out the reaction tRNA(Sec) + L-serine + ATP = L-seryl-tRNA(Sec) + AMP + diphosphate + H(+). It participates in aminoacyl-tRNA biosynthesis; selenocysteinyl-tRNA(Sec) biosynthesis; L-seryl-tRNA(Sec) from L-serine and tRNA(Sec): step 1/1. Its function is as follows. Catalyzes the attachment of serine to tRNA(Ser). Is also able to aminoacylate tRNA(Sec) with serine, to form the misacylated tRNA L-seryl-tRNA(Sec), which will be further converted into selenocysteinyl-tRNA(Sec). The protein is Serine--tRNA ligase of Tropheryma whipplei (strain Twist) (Whipple's bacillus).